The following is a 354-amino-acid chain: Sulfate/thiosulfate import ATP-binding protein CysA (354 aa).

The ABC transporter domain occupies 3-237 (IEVRGLSKRF…PATPFVYGFL (235 aa)). ATP is bound at residue 35–42 (GPSGCGKT).

Belongs to the ABC transporter superfamily. Sulfate/tungstate importer (TC 3.A.1.6) family. As to quaternary structure, the complex is composed of two ATP-binding proteins (CysA), two transmembrane proteins (CysT and CysW) and a solute-binding protein (CysP).

It localises to the cell inner membrane. It catalyses the reaction sulfate(out) + ATP + H2O = sulfate(in) + ADP + phosphate + H(+). It carries out the reaction thiosulfate(out) + ATP + H2O = thiosulfate(in) + ADP + phosphate + H(+). Part of the ABC transporter complex CysAWTP involved in sulfate/thiosulfate import. Responsible for energy coupling to the transport system. In Bordetella pertussis (strain Tohama I / ATCC BAA-589 / NCTC 13251), this protein is Sulfate/thiosulfate import ATP-binding protein CysA.